A 470-amino-acid polypeptide reads, in one-letter code: Cysteine--tRNA ligase (470 aa).

A Zn(2+)-binding site is contributed by C27. Residues 29-39 (PTVYNFFHIGN) carry the 'HIGH' region motif. Positions 211, 236, and 240 each coordinate Zn(2+). A 'KMSKS' region motif is present at residues 268-272 (KMSKS). Position 271 (K271) interacts with ATP.

Belongs to the class-I aminoacyl-tRNA synthetase family. In terms of assembly, monomer. Zn(2+) serves as cofactor.

It localises to the cytoplasm. It carries out the reaction tRNA(Cys) + L-cysteine + ATP = L-cysteinyl-tRNA(Cys) + AMP + diphosphate. This is Cysteine--tRNA ligase from Clostridium botulinum (strain Eklund 17B / Type B).